Consider the following 309-residue polypeptide: MINGVLLLHKERGMTSHDCVFKVRKILHTKKVGHTGTLDPEVSGVLPICIGRATKIVEYLTDKSKTYDAEITIGFSTTTEDQTGEIVEEKKVQNPISEEEIDAALKQFQGTIEQIPPMFSAVKIGGKKLYEYAREGIEIERPSREISIHRIERTTPALFENGTVSFRFTVLCSKGTYVRTLAVDIGKKLGFPAHMSHLIRTGSGDFTLDECITLDELRDISEEGTVDEHLVPIERALNHLPKWEINDTLASKVENGAVLPMPDEFAHFAEEDRVAVFAPSGRCMAIYMKHPTKQNLMKPAKILSQDKQS.

Aspartate 39 serves as the catalytic Nucleophile.

Belongs to the pseudouridine synthase TruB family. Type 1 subfamily.

The catalysed reaction is uridine(55) in tRNA = pseudouridine(55) in tRNA. In terms of biological role, responsible for synthesis of pseudouridine from uracil-55 in the psi GC loop of transfer RNAs. This is tRNA pseudouridine synthase B from Bacillus pumilus (strain SAFR-032).